A 454-amino-acid chain; its full sequence is L-cysteine desulfhydrase-like protein lolT1 (454 aa).

Position 227 is an N6-(pyridoxal phosphate)lysine (Lys227).

The protein belongs to the class-V pyridoxal-phosphate-dependent aminotransferase family. The cofactor is pyridoxal 5'-phosphate.

It participates in alkaloid biosynthesis. In terms of biological role, L-cysteine desulfhydrase-like protein; part of the gene cluster that mediates the biosynthesis of loline alkaloids, potent insecticidal agents composed of a pyrrolizidine ring system and an uncommon ether bridge linking carbons 2 and 7. Lolines are structurally differentiated by the various modifications of the L-amino group and include norloline, loline, N-methylloline, N-acetylloline, N-acetylnorloline, and N-formylloline. The first committed step is the condensation of O-acetyl-L-homoserine (derived from L-aspartic acid) and L-proline, probably catalyzed by the gamma-type pyridoxal 5'-phosphate(PLP)-dependent enzyme lolC, to give the diamino diacid, NACPP. Ensuing cyclization, decarboxylation, and acetylation steps yield 1-exo-acetamidopyrrolizidine (AcAP). LolO is required for installation of the ether bridge upon the pathway intermediate, 1-exo-acetamidopyrrolizidine (AcAP). In sequential 2-oxoglutarate- and O(2)-consuming steps, lolO removes hydrogens from C2 and C7 of AcAP to form both carbon-oxygen bonds in N-acetylnorloline (NANL), the precursor to all other lolines. The enzymes lolD, lolE, lolF and lolT have also been proposed to be involved in the ether-bridge installation. Further processing of the exocyclic moiety of NANL by fungal N-acetamidase (LolN), methyltransferase (LolM), and cytochrome P450 (LolP) enzymes, with occasional involvement of a plant acetyltransferase, generates the other known lolines. LolN transforms NANL to norlonine which is monomethylated and dimethylated to respectively lonine and N-methyllonine (NML) by lolM. LolP catalyzes hydroxylation of the methyl group in N-methylloline (NML) and further oxygenation to N-formylloline (NFL). A plant acetyltransferase is responsible for the acetylation of loline to form N-acetylloline (NAL). LolA might interact with aspartate kinase to prevent feedback inhibition of its activity by these end products and thereby promote production of L-homoserine from L-aspartate. This chain is L-cysteine desulfhydrase-like protein lolT1, found in Epichloe uncinata (Endophyte fungus).